Reading from the N-terminus, the 111-residue chain is HTH-type transcriptional regulator SinR (111 aa).

Residues 6 to 61 enclose the HTH cro/C1-type domain; it reads IKQYRKEKGYSLSELAEKAGVAKSYLSSIERNLQTNPSIQFLEKVSAVLDVSVHTL. Positions 17–36 form a DNA-binding region, H-T-H motif; the sequence is LSELAEKAGVAKSYLSSIER. One can recognise a Sin domain in the interval 65-103; the sequence is KDETEYDGQLDSEWENLVRDAMASGVSKKQFREFLDYQK.

Homotetramer. Also associates with SinI.

Affects autolysin level and flagellation. This Bacillus licheniformis protein is HTH-type transcriptional regulator SinR (sinR).